A 61-amino-acid chain; its full sequence is Metallothionein-2 (61 aa).

Residue Met1 is modified to N-acetylmethionine. The interval 1–29 is beta; the sequence is MDPNCSCAAGDSCTCAGSCKCKECKCTSC. Positions 5, 7, 13, 15, 19, 21, 24, 26, 29, 33, 34, 36, 37, 41, 44, 48, 50, and 57 each coordinate a divalent metal cation. The interval 30–61 is alpha; the sequence is KKSCCSCCPVGCAKCAQGCICKGASDKCSCCA. Ser58 is modified (phosphoserine). Residues Cys59 and Cys60 each contribute to the a divalent metal cation site.

Belongs to the metallothionein superfamily. Type 1 family. As to quaternary structure, interacts with EOLA1.

Functionally, metallothioneins have a high content of cysteine residues that bind various heavy metals; these proteins are transcriptionally regulated by both heavy metals and glucocorticoids. The protein is Metallothionein-2 of Homo sapiens (Human).